Here is a 272-residue protein sequence, read N- to C-terminus: Phosphate import ATP-binding protein PstB 1 (272 aa).

Residues 26 to 267 (ISIENLNLFY…PMKKQTEDYI (242 aa)) form the ABC transporter domain. ATP is bound at residue 58 to 65 (GPSGCGKS).

It belongs to the ABC transporter superfamily. Phosphate importer (TC 3.A.1.7) family. As to quaternary structure, the complex is composed of two ATP-binding proteins (PstB), two transmembrane proteins (PstC and PstA) and a solute-binding protein (PstS).

It localises to the cell inner membrane. It catalyses the reaction phosphate(out) + ATP + H2O = ADP + 2 phosphate(in) + H(+). Functionally, part of the ABC transporter complex PstSACB involved in phosphate import. Responsible for energy coupling to the transport system. This chain is Phosphate import ATP-binding protein PstB 1, found in Vibrio parahaemolyticus serotype O3:K6 (strain RIMD 2210633).